The following is a 232-amino-acid chain: Uracil-DNA glycosylase (232 aa).

The active-site Proton acceptor is the D66.

This sequence belongs to the uracil-DNA glycosylase (UDG) superfamily. UNG family.

The protein resides in the cytoplasm. The enzyme catalyses Hydrolyzes single-stranded DNA or mismatched double-stranded DNA and polynucleotides, releasing free uracil.. Excises uracil residues from the DNA which can arise as a result of misincorporation of dUMP residues by DNA polymerase or due to deamination of cytosine. The protein is Uracil-DNA glycosylase of Lactobacillus acidophilus (strain ATCC 700396 / NCK56 / N2 / NCFM).